The following is a 140-amino-acid chain: Desampylase (140 aa).

One can recognise an MPN domain in the interval 13-133 (TLIIPQHYLR…WILSEKNKIS (121 aa)). Residue glutamate 34 is the Proton donor/acceptor of the active site. Histidine 88, histidine 90, and aspartate 101 together coordinate Zn(2+). The JAMM motif motif lies at 88 to 101 (HSHIACPPIPSGKD).

This sequence belongs to the peptidase M67B family. Exists in two major states: monomer and homodimer. Both conformational states are catalytically active. Requires Zn(2+) as cofactor. In terms of processing, the disulfide bridge probably stabilizes the PfJAMM1 homodimer at the optimal growth temperature of the hyperthermophile.

It carries out the reaction an N(6)-[small archaeal modifier protein]-[protein]-L-lysine + H2O = a [protein]-L-lysine + a [small archaeal modifier protein].. Inhibited by EDTA in vitro. In terms of biological role, metalloprotease that displays desampylase (DSAMP) activity, cleaving ubiquitin-like small archaeal modifier proteins (SAMP1, SAMP2 and SAMP3) from protein conjugates (isopeptide- and linear-linked). Thus, likely regulates sampylation and the pools of 'free' SAMP available for protein modification. In vitro, is also able to cleave non-physiological ubiquitin (Ub) substrates, such as 'Met1-', 'Lys48-', and 'Lys63'-linked Ub dimers (Ub2), and to remove Ub tags from diverse proteins. The protein is Desampylase of Pyrococcus furiosus (strain ATCC 43587 / DSM 3638 / JCM 8422 / Vc1).